A 56-amino-acid polypeptide reads, in one-letter code: Trypsin inhibitor 1 (56 aa).

The signal sequence occupies residues 1–25 (MATTMAKLITLVVLAILAFVEVSVS). Positions 26–39 (GYKTSISTITIEDN) are excised as a propeptide. Positions 40-53 (GRCTKSIPPICFPD) form a cross-link, cyclopeptide (Gly-Asp). An intrachain disulfide couples cysteine 42 to cysteine 50. Positions 54 to 56 (GRP) are excised as a propeptide.

This is a cyclic peptide.

In terms of biological role, inhibits trypsin, cathepsin G, elastase, chymotrypsin and thrombin. Does not inhibit factor Xa. The sequence is that of Trypsin inhibitor 1 from Helianthus annuus (Common sunflower).